A 410-amino-acid polypeptide reads, in one-letter code: Probable 2,3-bisphosphoglycerate-independent phosphoglycerate mutase (410 aa).

This sequence belongs to the BPG-independent phosphoglycerate mutase family. A-PGAM subfamily.

The enzyme catalyses (2R)-2-phosphoglycerate = (2R)-3-phosphoglycerate. It functions in the pathway carbohydrate degradation; glycolysis; pyruvate from D-glyceraldehyde 3-phosphate: step 3/5. Catalyzes the interconversion of 2-phosphoglycerate and 3-phosphoglycerate. This Deinococcus radiodurans (strain ATCC 13939 / DSM 20539 / JCM 16871 / CCUG 27074 / LMG 4051 / NBRC 15346 / NCIMB 9279 / VKM B-1422 / R1) protein is Probable 2,3-bisphosphoglycerate-independent phosphoglycerate mutase.